The primary structure comprises 309 residues: Elongation factor Ts (309 aa).

Positions 82–85 are involved in Mg(2+) ion dislocation from EF-Tu; the sequence is TDFV.

Belongs to the EF-Ts family.

The protein resides in the cytoplasm. Functionally, associates with the EF-Tu.GDP complex and induces the exchange of GDP to GTP. It remains bound to the aminoacyl-tRNA.EF-Tu.GTP complex up to the GTP hydrolysis stage on the ribosome. The polypeptide is Elongation factor Ts (Rickettsia akari (strain Hartford)).